A 466-amino-acid polypeptide reads, in one-letter code: 3-isopropylmalate dehydratase large subunit (466 aa).

[4Fe-4S] cluster contacts are provided by C349, C410, and C413.

The protein belongs to the aconitase/IPM isomerase family. LeuC type 1 subfamily. Heterodimer of LeuC and LeuD. [4Fe-4S] cluster is required as a cofactor.

It catalyses the reaction (2R,3S)-3-isopropylmalate = (2S)-2-isopropylmalate. It functions in the pathway amino-acid biosynthesis; L-leucine biosynthesis; L-leucine from 3-methyl-2-oxobutanoate: step 2/4. Its function is as follows. Catalyzes the isomerization between 2-isopropylmalate and 3-isopropylmalate, via the formation of 2-isopropylmaleate. The protein is 3-isopropylmalate dehydratase large subunit of Vesicomyosocius okutanii subsp. Calyptogena okutanii (strain HA).